The following is a 224-amino-acid chain: Envelope glycoprotein L (224 aa).

The signal sequence occupies residues methionine 1–serine 22. The tract at residues glycine 20–valine 161 is interaction with gH. The interaction with gL stretch occupies residues glycine 20–valine 161. A gL alphaherpesvirus-type domain is found at serine 23–threonine 201. Disulfide bonds link cysteine 44–cysteine 76 and cysteine 149–cysteine 160. The segment at valine 161–leucine 224 is disordered. N-linked (GlcNAc...) asparagine; by host glycosylation occurs at asparagine 170. Residues lysine 213–leucine 224 show a composition bias toward basic residues.

The protein belongs to the herpesviridae glycoprotein L (gL) family. Alphaherpesvirinae gL subfamily. As to quaternary structure, interacts with glycoprotein H (gH); this interaction is necessary for the correct processing and cell surface expression of gH. The heterodimer gH/gL seems to interact with gB trimers during fusion. Post-translationally, N-glycosylated, O-glycosylated, and sialylated.

It is found in the virion membrane. The protein localises to the host cell membrane. It localises to the host Golgi apparatus. The protein resides in the host trans-Golgi network. In terms of biological role, the heterodimer glycoprotein H-glycoprotein L is required for the fusion of viral and plasma membranes leading to virus entry into the host cell. Acts as a functional inhibitor of gH and maintains gH in an inhibited form. Upon binding to host integrins, gL dissociates from gH leading to activation of the viral fusion glycoproteins gB and gH. In Human herpesvirus 1 (strain KOS) (HHV-1), this protein is Envelope glycoprotein L.